We begin with the raw amino-acid sequence, 293 residues long: Nucleotide-binding protein Bcer98_3698 (293 aa).

14 to 21 (GMSGAGKT) contributes to the ATP binding site. 65–68 (DLRG) is a binding site for GTP.

It belongs to the RapZ-like family.

Its function is as follows. Displays ATPase and GTPase activities. This chain is Nucleotide-binding protein Bcer98_3698, found in Bacillus cytotoxicus (strain DSM 22905 / CIP 110041 / 391-98 / NVH 391-98).